The primary structure comprises 147 residues: Hemoglobin subunit beta (147 aa).

The Globin domain occupies 3–147; the sequence is HWTAEEKQLI…VAHALARKYH (145 aa). Heme b is bound by residues His-64 and His-93.

Belongs to the globin family. As to quaternary structure, heterotetramer of two alpha chains and two beta chains. In terms of tissue distribution, red blood cells.

Functionally, involved in oxygen transport from the lung to the various peripheral tissues. This is Hemoglobin subunit beta (HBB) from Anas platyrhynchos (Mallard).